Here is a 152-residue protein sequence, read N- to C-terminus: Sec-independent protein translocase protein TatB (152 aa).

A helical membrane pass occupies residues 1–21 (MLDVGFGELFCFGIIALLVLG).

This sequence belongs to the TatB family. The Tat system comprises two distinct complexes: a TatABC complex, containing multiple copies of TatA, TatB and TatC subunits, and a separate TatA complex, containing only TatA subunits. Substrates initially bind to the TatABC complex, which probably triggers association of the separate TatA complex to form the active translocon.

The protein localises to the cell inner membrane. Functionally, part of the twin-arginine translocation (Tat) system that transports large folded proteins containing a characteristic twin-arginine motif in their signal peptide across membranes. Together with TatC, TatB is part of a receptor directly interacting with Tat signal peptides. TatB may form an oligomeric binding site that transiently accommodates folded Tat precursor proteins before their translocation. In Acinetobacter baylyi (strain ATCC 33305 / BD413 / ADP1), this protein is Sec-independent protein translocase protein TatB.